A 106-amino-acid chain; its full sequence is Large ribosomal subunit protein eL42 (106 aa).

It belongs to the eukaryotic ribosomal protein eL42 family.

In Eremothecium gossypii (strain ATCC 10895 / CBS 109.51 / FGSC 9923 / NRRL Y-1056) (Yeast), this protein is Large ribosomal subunit protein eL42 (RPL44).